The sequence spans 100 residues: Cell division protein DrpB (100 aa).

Residues 1–16 (MEYGSTKMEERLSRSP) lie on the Cytoplasmic side of the membrane. Residues 17 to 37 (GGKLALWAFYTWCGYFVWAMA) traverse the membrane as a helical segment. Residues 38 to 64 (RYIWVMSRIPDAPVSGFESDLGSTAGK) lie on the Periplasmic side of the membrane. Residues 65–85 (WLGALVGFLFMALVGALLGSI) form a helical membrane-spanning segment. Over 86-100 (AWYTRPRPARSRRYE) the chain is Cytoplasmic.

The protein belongs to the DrpB family. Bacterial adenylate cyclase hybrid (BACTH) studies show interaction of this protein with DamX, FtsI, FtsN, FtsQ, YmgF, DedD, FtsA and MalF, as well as weaker interactions with DedD, MalG and PBP2, but this assay often generates false positive results.

The protein localises to the cell inner membrane. A non-essential division protein that localizes to the septal ring in low ionic strength medium. Its function is as follows. Localizes to the septal ring in about 30% of observed cells before cell constriction occurs; localization occurs in low ionic strength medium (0 NaCl) and requires FtsZ but not FtsEX. Overexpression partially restores correct FtsI localization to the division septum in an ftsEX deletion. Isolated as a multicopy suppressor of an ftsEX deletion mutant; it does not suppress other cell division defects (e.g. ftsA, ftsI, ftsQ or ftsZ). This chain is Cell division protein DrpB, found in Escherichia coli (strain K12).